We begin with the raw amino-acid sequence, 475 residues long: Argininosuccinate lyase 1 (475 aa).

This sequence belongs to the lyase 1 family. Argininosuccinate lyase subfamily.

The protein resides in the cytoplasm. It catalyses the reaction 2-(N(omega)-L-arginino)succinate = fumarate + L-arginine. It participates in amino-acid biosynthesis; L-arginine biosynthesis; L-arginine from L-ornithine and carbamoyl phosphate: step 3/3. The sequence is that of Argininosuccinate lyase 1 from Pseudomonas fluorescens (strain Pf0-1).